The primary structure comprises 57 residues: Preprotein translocase subunit SecG (57 aa).

Residues 1 to 33 (MARRRKYEGLNPFVAAGLIKFSEEGELERIKLN) lie on the Cytoplasmic side of the membrane. A helical membrane pass occupies residues 34-55 (PRTAILVSITVIIAILVLNILH). At 56-57 (PL) the chain is on the extracellular side.

The protein belongs to the SEC61-beta family. Component of the protein translocase complex. Heterotrimer consisting of alpha (SecY), beta (SecG) and gamma (SecE) subunits. Can form oligomers of the heterotrimer.

Its subcellular location is the cell membrane. Functionally, involved in protein export. The function of the beta subunit is unknown, but it may be involved in stabilization of the trimeric complex. This is Preprotein translocase subunit SecG from Pyrobaculum islandicum (strain DSM 4184 / JCM 9189 / GEO3).